The sequence spans 372 residues: D-alanine--D-alanine ligase (372 aa).

The 205-residue stretch at 145–349 (KTVLRAGGIP…CPNLLDQLIE (205 aa)) folds into the ATP-grasp domain. ATP is bound at residue 176 to 231 (DRWGTSELFVKAVSLGSSVATLPVKTETEFTKAVKEVFRYDDRLMVEPRIRGREIE). Asp303, Glu316, and Asn318 together coordinate Mg(2+).

Belongs to the D-alanine--D-alanine ligase family. Mg(2+) is required as a cofactor. The cofactor is Mn(2+).

It localises to the cytoplasm. It catalyses the reaction 2 D-alanine + ATP = D-alanyl-D-alanine + ADP + phosphate + H(+). Its pathway is cell wall biogenesis; peptidoglycan biosynthesis. Its function is as follows. Cell wall formation. The polypeptide is D-alanine--D-alanine ligase (Coxiella burnetii (strain CbuK_Q154) (Coxiella burnetii (strain Q154))).